Reading from the N-terminus, the 534-residue chain is ATP-dependent rRNA helicase RRP3 (534 aa).

The segment at 67–107 (KQQALQKQQKQQKQQEQENANHNQTESSLSSSSSTTSSSIT) is disordered. Composition is skewed to low complexity over residues 68-80 (QQAL…QQKQ) and 91-107 (TESS…SSIT). Positions 118-146 (KTFKELNLVPDLLESIESMKFTKPTPIQS) match the Q motif motif. In terms of domain architecture, Helicase ATP-binding spans 149–320 (IPHALEGKDI…RASLHNPVRV (172 aa)). 162–169 (AQTGSGKT) contributes to the ATP binding site. The DEAD box motif lies at 268-271 (DEAD). The Helicase C-terminal domain occupies 347 to 492 (ILIHLLNEFM…EDKPPKEVLD (146 aa)). 2 stretches are compositionally biased toward basic and acidic residues: residues 505–517 (AIRQ…DKRN) and 525–534 (NRDDADREER). Residues 505–534 (AIRQTKEIHDKRNGGGGRRRNRDDADREER) are disordered.

This sequence belongs to the DEAD box helicase family. DDX47/RRP3 subfamily. Interacts with the SSU processome.

It is found in the nucleus. It catalyses the reaction ATP + H2O = ADP + phosphate + H(+). Its function is as follows. ATP-dependent rRNA helicase required for pre-ribosomal RNA processing. Involved in the maturation of the 35S-pre-rRNA and to its cleavage to mature 18S rRNA. In Candida albicans (strain SC5314 / ATCC MYA-2876) (Yeast), this protein is ATP-dependent rRNA helicase RRP3.